Consider the following 246-residue polypeptide: Large ribosomal subunit protein uL2 (246 aa).

The tract at residues 197–227 (SPYAHPHGGGSHQKGGTPVPKTAPPGQKVGF) is disordered.

The protein belongs to the universal ribosomal protein uL2 family. In terms of assembly, part of the 50S ribosomal subunit. Forms a bridge to the 30S subunit in the 70S ribosome.

Functionally, one of the primary rRNA binding proteins. Required for association of the 30S and 50S subunits to form the 70S ribosome, for tRNA binding and peptide bond formation. It has been suggested to have peptidyltransferase activity; this is somewhat controversial. Makes several contacts with the 16S rRNA in the 70S ribosome. The protein is Large ribosomal subunit protein uL2 of Pyrobaculum aerophilum (strain ATCC 51768 / DSM 7523 / JCM 9630 / CIP 104966 / NBRC 100827 / IM2).